The chain runs to 449 residues: Nucleoporin NUP42 (449 aa).

The C3H1-type zinc-finger motif lies at M1–G25. 2 disordered regions span residues H22–N84 and D218–P237. Polar residues-rich tracts occupy residues W47–D83 and D218–Q227. FG repeat units lie at residues F231–G232, F274–G275, F284–G285, F305–G306, F314–G315, F335–G336, and F347–G348.

In terms of assembly, probable component of the nuclear pore complex (NPC).

It is found in the nucleus. The protein resides in the nuclear pore complex. Its subcellular location is the nucleus membrane. Its function is as follows. Required for the export of mRNAs containing poly(A) tails from the nucleus into the cytoplasm. The protein is Nucleoporin NUP42 (nup42) of Xenopus tropicalis (Western clawed frog).